Consider the following 268-residue polypeptide: MRLEIENGLEFVNDPVVNELGKICFFHPFTGNLTNKLSFRSHFNRYSFYAINYPGHGNSVINNPKQLEFSYWLEITKQFFDKHNLKDVILFGHSIGGGLAVALTNYLSSDQYKAVLLEAPLNPAIVETPLNIVQNLIPDPDSDFAVIQKCLVYNIEKKLGANFKEYCEREKQKSIHQNQRLKVMLEPSTLKQNIVLINAAFLKLNCPALWIHGKQDGIIKYLPSKAYYESLNNKQIQFKAIEAAAHTPYFEQPQKFLSLVNDFFQLIS.

The active site involves histidine 27. Catalysis depends on serine 94, which acts as the Charge relay system.

This sequence belongs to the lipase/esterase LIP3/BchO family.

The chain is Putative esterase/lipase 1 from Mycoplasma genitalium (strain ATCC 33530 / DSM 19775 / NCTC 10195 / G37) (Mycoplasmoides genitalium).